The following is a 107-amino-acid chain: Ig kappa chain V region 4135 (107 aa).

The interval 1–24 (ADIVMTQTPASVSEPVGGTVTIKC) is framework-1. Residues 25–35 (QTSQSIDDYLS) are complementarity-determining-1. Residues 36–50 (WYQQKPGQPPKGLIY) form a framework-2 region. Positions 51 to 57 (RASTLAS) are complementarity-determining-2. The tract at residues 58-89 (GVPSRFRGSGSGTDFTLTISDLECADAATYYC) is framework-3. The segment at 90-96 (QSTYGVG) is complementarity-determining-3. The framework-4 stretch occupies residues 97-106 (FGGGTEVVVK).

This is Ig kappa chain V region 4135 from Oryctolagus cuniculus (Rabbit).